Here is a 145-residue protein sequence, read N- to C-terminus: Mannitol-specific phosphotransferase enzyme IIA component (145 aa).

The PTS EIIA type-2 domain maps to 2–145 (ENLTNISIEL…EEITENLAIA (144 aa)). His62 acts as the Tele-phosphohistidine intermediate in catalysis. Residue His62 is modified to Phosphohistidine; by HPr.

The protein resides in the cytoplasm. Functionally, the phosphoenolpyruvate-dependent sugar phosphotransferase system (sugar PTS), a major carbohydrate active transport system, catalyzes the phosphorylation of incoming sugar substrates concomitantly with their translocation across the cell membrane. The enzyme II CmtAB PTS system is involved in D-mannitol transport. In Enterococcus faecalis (strain ATCC 700802 / V583), this protein is Mannitol-specific phosphotransferase enzyme IIA component.